We begin with the raw amino-acid sequence, 92 residues long: UPF0250 protein COSY_0496 (92 aa).

It belongs to the UPF0250 family.

The protein is UPF0250 protein COSY_0496 of Vesicomyosocius okutanii subsp. Calyptogena okutanii (strain HA).